The primary structure comprises 142 residues: Hemoglobin subunit alpha-1/2 (142 aa).

Positions 2-142 (VLSPADKTNI…VSTVLTSKYR (141 aa)) constitute a Globin domain. Serine 4 is subject to Phosphoserine. An N6-succinyllysine modification is found at lysine 8. Threonine 9 is modified (phosphothreonine). An N6-succinyllysine modification is found at lysine 12. Position 17 is an N6-acetyllysine; alternate (lysine 17). Lysine 17 is modified (N6-succinyllysine; alternate). Tyrosine 25 carries the phosphotyrosine modification. At lysine 41 the chain carries N6-succinyllysine. An O2-binding site is contributed by histidine 59. Histidine 88 is a binding site for heme b. Serine 103 carries the post-translational modification Phosphoserine. Threonine 109 carries the post-translational modification Phosphothreonine. Residue serine 125 is modified to Phosphoserine. Residues threonine 135 and threonine 138 each carry the phosphothreonine modification. A Phosphoserine modification is found at serine 139.

It belongs to the globin family. Heterotetramer of two alpha chains and two beta chains. In terms of tissue distribution, red blood cells.

Its function is as follows. Involved in oxygen transport from the lung to the various peripheral tissues. In Oryctolagus cuniculus (Rabbit), this protein is Hemoglobin subunit alpha-1/2.